The primary structure comprises 82 residues: MVTIRLARHGAKKRPFYQVVVTDSRNARNGRFIERVGFFNPLASGAEEETRLDLARVAHWVGLGATVSDRVAALIKAANKAA.

It belongs to the bacterial ribosomal protein bS16 family.

The chain is Small ribosomal subunit protein bS16 from Enterobacter sp. (strain 638).